Here is a 312-residue protein sequence, read N- to C-terminus: Glycerol-3-phosphate dehydrogenase [NAD(P)+] (312 aa).

Residues Trp11, Arg30, Arg31, and Lys95 each contribute to the NADPH site. 3 residues coordinate sn-glycerol 3-phosphate: Lys95, Gly123, and Ser125. NADPH is bound at residue Ala127. Sn-glycerol 3-phosphate is bound by residues Lys177, Asp230, Ser240, Arg241, and Asn242. Lys177 functions as the Proton acceptor in the catalytic mechanism. NADPH is bound at residue Arg241. Residues Val265 and Glu267 each coordinate NADPH.

Belongs to the NAD-dependent glycerol-3-phosphate dehydrogenase family.

It localises to the cytoplasm. The enzyme catalyses sn-glycerol 3-phosphate + NAD(+) = dihydroxyacetone phosphate + NADH + H(+). It carries out the reaction sn-glycerol 3-phosphate + NADP(+) = dihydroxyacetone phosphate + NADPH + H(+). Its pathway is membrane lipid metabolism; glycerophospholipid metabolism. Its function is as follows. Catalyzes the reduction of the glycolytic intermediate dihydroxyacetone phosphate (DHAP) to sn-glycerol 3-phosphate (G3P), the key precursor for phospholipid synthesis. In Helicobacter pylori (strain HPAG1), this protein is Glycerol-3-phosphate dehydrogenase [NAD(P)+].